The following is a 352-amino-acid chain: UDP-N-acetylglucosamine--N-acetylmuramyl-(pentapeptide) pyrophosphoryl-undecaprenol N-acetylglucosamine transferase (352 aa).

The UDP-N-acetyl-alpha-D-glucosamine site is built by serine 195 and glutamine 287.

It belongs to the glycosyltransferase 28 family. MurG subfamily.

Its subcellular location is the cell membrane. The catalysed reaction is Mur2Ac(oyl-L-Ala-gamma-D-Glu-L-Lys-D-Ala-D-Ala)-di-trans,octa-cis-undecaprenyl diphosphate + UDP-N-acetyl-alpha-D-glucosamine = beta-D-GlcNAc-(1-&gt;4)-Mur2Ac(oyl-L-Ala-gamma-D-Glu-L-Lys-D-Ala-D-Ala)-di-trans,octa-cis-undecaprenyl diphosphate + UDP + H(+). It participates in cell wall biogenesis; peptidoglycan biosynthesis. Its function is as follows. Cell wall formation. Catalyzes the transfer of a GlcNAc subunit on undecaprenyl-pyrophosphoryl-MurNAc-pentapeptide (lipid intermediate I) to form undecaprenyl-pyrophosphoryl-MurNAc-(pentapeptide)GlcNAc (lipid intermediate II). This is UDP-N-acetylglucosamine--N-acetylmuramyl-(pentapeptide) pyrophosphoryl-undecaprenol N-acetylglucosamine transferase from Streptococcus pneumoniae serotype 19F (strain G54).